The sequence spans 202 residues: MSRYRGPRLRVTRRLGELPGLTRKASKKSNPPGQHGQARRKRSEYAIRLEEKQKLRFNYGVSEKQLVRYVKKARAQEGSTGTNLLRLLENRLDNVCFRLGFGGTIPGSRQLVNHGHVTVNGKVLDIAGYQCKSGDVIGIKENKASKKLVEGNIEFPGLANVPPHLDLDKPKLTGKINGKCDREWVALEINELLVVEYYSRKV.

The segment covering 1-13 has biased composition (basic residues); it reads MSRYRGPRLRVTR. Residues 1–42 are disordered; sequence MSRYRGPRLRVTRRLGELPGLTRKASKKSNPPGQHGQARRKR. The region spanning 90-152 is the S4 RNA-binding domain; the sequence is NRLDNVCFRL…KASKKLVEGN (63 aa).

The protein belongs to the universal ribosomal protein uS4 family. In terms of assembly, part of the 30S ribosomal subunit. Contacts protein S5. The interaction surface between S4 and S5 is involved in control of translational fidelity.

Its function is as follows. One of the primary rRNA binding proteins, it binds directly to 16S rRNA where it nucleates assembly of the body of the 30S subunit. With S5 and S12 plays an important role in translational accuracy. This is Small ribosomal subunit protein uS4 from Prochlorococcus marinus (strain AS9601).